We begin with the raw amino-acid sequence, 139 residues long: uncharacterized protein (139 aa).

This is an uncharacterized protein from Dictyostelium discoideum (Social amoeba).